The sequence spans 185 residues: Peptidyl-tRNA hydrolase (185 aa).

Tyrosine 14 lines the tRNA pocket. The active-site Proton acceptor is the histidine 19. Residues phenylalanine 64, asparagine 66, and asparagine 112 each contribute to the tRNA site.

It belongs to the PTH family. In terms of assembly, monomer.

It is found in the cytoplasm. The catalysed reaction is an N-acyl-L-alpha-aminoacyl-tRNA + H2O = an N-acyl-L-amino acid + a tRNA + H(+). Its function is as follows. Hydrolyzes ribosome-free peptidyl-tRNAs (with 1 or more amino acids incorporated), which drop off the ribosome during protein synthesis, or as a result of ribosome stalling. Functionally, catalyzes the release of premature peptidyl moieties from peptidyl-tRNA molecules trapped in stalled 50S ribosomal subunits, and thus maintains levels of free tRNAs and 50S ribosomes. This is Peptidyl-tRNA hydrolase from Levilactobacillus brevis (strain ATCC 367 / BCRC 12310 / CIP 105137 / JCM 1170 / LMG 11437 / NCIMB 947 / NCTC 947) (Lactobacillus brevis).